A 130-amino-acid chain; its full sequence is Small ribosomal subunit protein uS9 (130 aa).

The tract at residues 98–130 (LKRAGLLTRDPRMKERKKPGLKKARRSPQFSKR) is disordered. Basic residues predominate over residues 111-130 (KERKKPGLKKARRSPQFSKR).

It belongs to the universal ribosomal protein uS9 family.

This is Small ribosomal subunit protein uS9 from Staphylococcus saprophyticus subsp. saprophyticus (strain ATCC 15305 / DSM 20229 / NCIMB 8711 / NCTC 7292 / S-41).